We begin with the raw amino-acid sequence, 98 residues long: Small ribosomal subunit protein bS20 (98 aa).

Belongs to the bacterial ribosomal protein bS20 family.

Its function is as follows. Binds directly to 16S ribosomal RNA. The protein is Small ribosomal subunit protein bS20 of Prochlorococcus marinus (strain NATL1A).